Here is a 127-residue protein sequence, read N- to C-terminus: Major sperm protein 2 (127 aa).

Alanine 2 is modified (N-acetylalanine). Residues 9-126 (DIHTQPGSKI…RRKNLPIEYN (118 aa)) enclose the MSP domain.

As to expression, sperm.

Its subcellular location is the cell projection. It localises to the pseudopodium. It is found in the cytoplasm. The protein resides in the cytoskeleton. Functionally, central component in molecular interactions underlying sperm crawling. Forms an extensive filament system that extends from sperm villipoda, along the leading edge of the pseudopod. In Onchocerca volvulus, this protein is Major sperm protein 2.